Reading from the N-terminus, the 840-residue chain is Lysine-specific demethylase JMJ27 (840 aa).

Positions 1-10 (MEKMRGKRIR) are enriched in basic residues. The disordered stretch occupies residues 1–52 (MEKMRGKRIRPRDSGELVEDGRSESERKTRKKENDVVSKGRIGRGRGRGEVS). Positions 11–38 (PRDSGELVEDGRSESERKTRKKENDVVS) are enriched in basic and acidic residues. Zn(2+) contacts are provided by Cys-80, Cys-83, Cys-95, Cys-98, Cys-104, Cys-107, Cys-124, and Cys-127. The segment at 80 to 127 (CHHCKILTSESDLIFCSKCNKKCYCFDCIKRSYSERTHEEVRAACPFC) adopts an RING-type; degenerate zinc-finger fold. The 297-residue stretch at 502-798 (PKSGILNLAT…ECLRLTQEFR (297 aa)) folds into the JmjC domain. Fe cation contacts are provided by His-546 and Asp-548. A disordered region spans residues 594–678 (KEASELENKS…ETDGNTNERS (85 aa)). Residues 595–620 (EASELENKSMKEVDESKKDLKDKAAN) show a composition bias toward basic and acidic residues. Over residues 621 to 631 (EEQSNNSSRPS) the composition is skewed to polar residues. Residues 635–646 (EAEKVIISKEDN) are compositionally biased toward basic and acidic residues. Residues 647-659 (PTQPAVSTSVESI) show a composition bias toward polar residues. Basic and acidic residues predominate over residues 660 to 678 (QEQKLDAPKETDGNTNERS). His-766 is a binding site for Fe cation.

It belongs to the JARID1 histone demethylase family. Interacts with RPN1A. Fe(2+) is required as a cofactor. Expressed in seedlings, inflorescences, flowers and siliques, and, at low levels, in roots, leaves (including vascular bundles) and stems. Particularly observed in stomatal guard cells.

It localises to the nucleus. It is found in the cytoplasm. The catalysed reaction is N(6),N(6)-dimethyl-L-lysyl(9)-[histone H3] + 2-oxoglutarate + O2 = N(6)-methyl-L-lysyl(9)-[histone H3] + formaldehyde + succinate + CO2. It catalyses the reaction N(6)-methyl-L-lysyl(9)-[histone H3] + 2-oxoglutarate + O2 = L-lysyl(9)-[histone H3] + formaldehyde + succinate + CO2. It carries out the reaction N(6),N(6)-dimethyl-L-lysyl(9)-[histone H3] + 2 2-oxoglutarate + 2 O2 = L-lysyl(9)-[histone H3] + 2 formaldehyde + 2 succinate + 2 CO2. Functionally, histone demethylase that demethylates 'Lys-9' (H3K9me) of histone H3 with a specific activity for H3K9me1 and H3K9me2. No activity on H3K4, H3K27, H3K36, H3R2 and H4R3 methyl marks, but weak activity on H3K9me3. Involved in regulation of gene expression. Regulates flowering time by repressing the major flowering regulator CONSTANS (CO) and promoting FLOWERING LOCUS C (FLC). Exhibits a positive impact on abscisic acid- (ABA), hydrogen peroxide- (H(2)O(2)) and calcium- (Ca(2+)) induced stomatal closure. Promotes stomatal-closure-dependent drought-stress responses through its histone demethylase activity toward at least GOLS2 and RD20 loci, thus protecting them from silencing by removing H3K9me2 marks in drought conditions. Required for plant defenses leading to resistance against the virulent bacterial pathogen Pseudomonas syringae pv. tomato DC3000 (Pst DC3000) via a negative regulation of WRKY25 (a repressor of defense) and by triggering the expression of several pathogenesis-related (PR) proteins (e.g. PR1, PR3, PR4 and PR5). In Arabidopsis thaliana (Mouse-ear cress), this protein is Lysine-specific demethylase JMJ27.